The following is a 428-amino-acid chain: Pyruvate kinase (428 aa).

R34 contacts substrate. K(+) contacts are provided by N36, S38, D68, and T69. 36–39 (NFSH) serves as a coordination point for ATP. Residues R75 and K152 each contribute to the ATP site. E214 contacts Mg(2+). 3 residues coordinate substrate: G237, D238, and T270. A Mg(2+)-binding site is contributed by D238.

It belongs to the pyruvate kinase family. As to quaternary structure, homotetramer. The cofactor is Mg(2+). It depends on K(+) as a cofactor.

It carries out the reaction pyruvate + ATP = phosphoenolpyruvate + ADP + H(+). It functions in the pathway carbohydrate degradation; glycolysis; pyruvate from D-glyceraldehyde 3-phosphate: step 5/5. This Encephalitozoon cuniculi (strain GB-M1) (Microsporidian parasite) protein is Pyruvate kinase (PYK1).